Here is a 64-residue protein sequence, read N- to C-terminus: MVVKENFCGACLTIPLAFAGAGTAIGAEKAATIKKWSIVITIISLLLTVWFIYVKKCSTCKLRP.

A signal peptide spans 1–26 (MVVKENFCGACLTIPLAFAGAGTAIG). A helical transmembrane segment spans residues 33-53 (IKKWSIVITIISLLLTVWFIY).

It belongs to the IIV-6 010R family.

It localises to the host membrane. This is an uncharacterized protein from Aedes vexans (Inland floodwater mosquito).